Reading from the N-terminus, the 284-residue chain is Bifunctional protein FolD (284 aa).

NADP(+) contacts are provided by residues 165–167 and Ser190; that span reads GRS.

The protein belongs to the tetrahydrofolate dehydrogenase/cyclohydrolase family. Homodimer.

The catalysed reaction is (6R)-5,10-methylene-5,6,7,8-tetrahydrofolate + NADP(+) = (6R)-5,10-methenyltetrahydrofolate + NADPH. It carries out the reaction (6R)-5,10-methenyltetrahydrofolate + H2O = (6R)-10-formyltetrahydrofolate + H(+). Its pathway is one-carbon metabolism; tetrahydrofolate interconversion. In terms of biological role, catalyzes the oxidation of 5,10-methylenetetrahydrofolate to 5,10-methenyltetrahydrofolate and then the hydrolysis of 5,10-methenyltetrahydrofolate to 10-formyltetrahydrofolate. The polypeptide is Bifunctional protein FolD (Streptococcus equi subsp. zooepidemicus (strain H70)).